The following is a 119-amino-acid chain: Large ribosomal subunit protein bL20 (119 aa).

It belongs to the bacterial ribosomal protein bL20 family.

Binds directly to 23S ribosomal RNA and is necessary for the in vitro assembly process of the 50S ribosomal subunit. It is not involved in the protein synthesizing functions of that subunit. The sequence is that of Large ribosomal subunit protein bL20 from Xylella fastidiosa (strain 9a5c).